The chain runs to 310 residues: Thiamine-monophosphate kinase (310 aa).

3 residues coordinate Mg(2+): Asp24, Thr38, and Asp39. Residue Asp46 coordinates substrate. Mg(2+)-binding residues include Asp67 and Asp115. ATP-binding positions include 114–115 (GD) and Arg138. Mg(2+) is bound at residue Asp203. Ser205 provides a ligand contact to ATP. Asp206 contributes to the Mg(2+) binding site. Residues Glu251 and Trp306 each coordinate substrate.

It belongs to the thiamine-monophosphate kinase family.

It catalyses the reaction thiamine phosphate + ATP = thiamine diphosphate + ADP. Its pathway is cofactor biosynthesis; thiamine diphosphate biosynthesis; thiamine diphosphate from thiamine phosphate: step 1/1. Its function is as follows. Catalyzes the ATP-dependent phosphorylation of thiamine-monophosphate (TMP) to form thiamine-pyrophosphate (TPP), the active form of vitamin B1. The protein is Thiamine-monophosphate kinase of Nitrosopumilus maritimus (strain SCM1).